The primary structure comprises 618 residues: MKQSKLLIPTLREMPSDAQVISHALMVRAGYVRQVSAGIYAYLPLANRTIEKFKTIMREEFEKIGAVEMLAPALLTADLWRESGRYETYGEDLYKLKNRDNSDFILGPTHEETFTTLVRNAVKSYKQLPLNLYQIQSKYRDEKRPRNGLLRTREFIMKDGYSFHHNYEDLDVTYEDYRQAYEAIFTRAGLDFKGIIGDGGAMGGKDSQEFMAITPARTDLDRWVVLDKSIASMDDIPKEVLEEIKAELAAWMISGEDTIAYSTKSSYAANLEMATNEYKPSSKVAAEDALAEVETPHCKTIDEVAAFLSVDETQTIKTLLFVADNEPVVALLVGNDHINTVKLKNYLAADFLEPASEEEARAFFGAGFGSLGPVNLAQGSRIVADRKVQNLTNAVAGANKDGFHVTGVNPGRDFQAEYVDIREVKEGEMSPDGHGVLQFARGIEVGHIFKLGTRYSDSMGATILDENGRTVPIVMGCYGIGVSRILSAVIEQHARLFVNKTPKGDYRYAWGINFPKELAPFDVHLITVNVKDQVAQDLTAKLEADLMAKGYDVLTDDRNERVGSKFSDSDLIGLPIRVTVGKKAAEGIVEIKIKATGDSIEVNAENLIETLEILTKEH.

The protein belongs to the class-II aminoacyl-tRNA synthetase family. ProS type 1 subfamily. In terms of assembly, homodimer.

It is found in the cytoplasm. It catalyses the reaction tRNA(Pro) + L-proline + ATP = L-prolyl-tRNA(Pro) + AMP + diphosphate. Catalyzes the attachment of proline to tRNA(Pro) in a two-step reaction: proline is first activated by ATP to form Pro-AMP and then transferred to the acceptor end of tRNA(Pro). As ProRS can inadvertently accommodate and process non-cognate amino acids such as alanine and cysteine, to avoid such errors it has two additional distinct editing activities against alanine. One activity is designated as 'pretransfer' editing and involves the tRNA(Pro)-independent hydrolysis of activated Ala-AMP. The other activity is designated 'posttransfer' editing and involves deacylation of mischarged Ala-tRNA(Pro). The misacylated Cys-tRNA(Pro) is not edited by ProRS. This is Proline--tRNA ligase from Streptococcus pyogenes serotype M3 (strain ATCC BAA-595 / MGAS315).